The primary structure comprises 49 residues: Protein OPG059 (49 aa).

Residue M1 is a topological domain, virion surface. A helical membrane pass occupies residues 2-22; that stretch reads VIGLVIFVSVAAAIVGVLSNV. The Intravirion portion of the chain corresponds to 23–49; that stretch reads LDMLMYVEENNEEDARIKEEQELLLLY.

The protein belongs to the orthopoxvirus OPG058 family.

The protein resides in the virion membrane. It localises to the host membrane. Its function is as follows. May play a role in cell adhesion and is important for virus virulence in vivo, although it is not required for the virus life cycle in cell cultures. The protein is Protein OPG059 (OPG059) of Vaccinia virus (strain Western Reserve) (VACV).